A 335-amino-acid polypeptide reads, in one-letter code: Phosphate acyltransferase (335 aa).

The protein belongs to the PlsX family. Homodimer. Probably interacts with PlsY.

The protein localises to the cytoplasm. It catalyses the reaction a fatty acyl-[ACP] + phosphate = an acyl phosphate + holo-[ACP]. Its pathway is lipid metabolism; phospholipid metabolism. Functionally, catalyzes the reversible formation of acyl-phosphate (acyl-PO(4)) from acyl-[acyl-carrier-protein] (acyl-ACP). This enzyme utilizes acyl-ACP as fatty acyl donor, but not acyl-CoA. The protein is Phosphate acyltransferase of Clostridium botulinum (strain Loch Maree / Type A3).